The chain runs to 32 residues: Hainantoxin F8-35.23 (32 aa).

As to expression, expressed by the venom gland.

The protein localises to the secreted. In Cyriopagopus hainanus (Chinese bird spider), this protein is Hainantoxin F8-35.23.